Reading from the N-terminus, the 202-residue chain is 3-isopropylmalate dehydratase small subunit 2 (202 aa).

The protein belongs to the LeuD family. LeuD type 1 subfamily. In terms of assembly, heterodimer of LeuC and LeuD.

It carries out the reaction (2R,3S)-3-isopropylmalate = (2S)-2-isopropylmalate. The protein operates within amino-acid biosynthesis; L-leucine biosynthesis; L-leucine from 3-methyl-2-oxobutanoate: step 2/4. Catalyzes the isomerization between 2-isopropylmalate and 3-isopropylmalate, via the formation of 2-isopropylmaleate. The sequence is that of 3-isopropylmalate dehydratase small subunit 2 from Bordetella parapertussis (strain 12822 / ATCC BAA-587 / NCTC 13253).